Here is a 190-residue protein sequence, read N- to C-terminus: MHKLIAGVDEVGRGPLVGDVVTAAVILDPQNPIEGLTDSKKLSEKKRVALAQEIREKALYWNIGRASPEEIDKLNILHATMLAMIRAVEGLPVKPDFVRVDGNRLPAWNFDSEAVVKGDSLHAEISAASIIAKVERDNDMISLHEAFPQYNFAGHKGYPTKAHFEAIAEYGILDCYRKSFKPVKALLEEK.

The RNase H type-2 domain occupies 3–190 (KLIAGVDEVG…KPVKALLEEK (188 aa)). 3 residues coordinate a divalent metal cation: D9, E10, and D101.

Belongs to the RNase HII family. Requires Mn(2+) as cofactor. It depends on Mg(2+) as a cofactor.

The protein resides in the cytoplasm. It carries out the reaction Endonucleolytic cleavage to 5'-phosphomonoester.. Endonuclease that specifically degrades the RNA of RNA-DNA hybrids. This chain is Ribonuclease HII, found in Alteromonas mediterranea (strain DSM 17117 / CIP 110805 / LMG 28347 / Deep ecotype).